Reading from the N-terminus, the 356-residue chain is MTKENICIVFGGKSAEHEVSILTAQNVLNAIDKDKYHVDIIYITNDGDWRKQNNITTEIKSTDELHLENGEALEISQLLKESSSGQPYDAVFPLLHGPNGEDGTIQGLFEVLDVPYVGNGVLSAASSMDKLVMKQLFEHRGLPQLPYISFLRSEYEKYEHNILKLVNDKLNYPVFVKPANLGSSIGISKCSNEVELKEGIKEAFQFDRKLVIEQGVNAREIEVAVLGNDYPEATWPGEVVKDVAFYDYKSKYKDGKVQLQIPADLDEDVQLTLRNMALEAFKATDCSGLVRADFFVTEDNQIYINETNAMPGFTAFSMYPKLWENMGLSYPELITKLIELAKERHQDKQKNKYKID.

The 206-residue stretch at 134–339 (KQLFEHRGLP…YPELITKLIE (206 aa)) folds into the ATP-grasp domain. An ATP-binding site is contributed by 167-222 (NDKLNYPVFVKPANLGSSIGISKCSNEVELKEGIKEAFQFDRKLVIEQGVNAREIE). Residues Asp293, Glu306, and Asn308 each contribute to the Mg(2+) site.

This sequence belongs to the D-alanine--D-alanine ligase family. The cofactor is Mg(2+). Requires Mn(2+) as cofactor.

Its subcellular location is the cytoplasm. It carries out the reaction 2 D-alanine + ATP = D-alanyl-D-alanine + ADP + phosphate + H(+). It functions in the pathway cell wall biogenesis; peptidoglycan biosynthesis. Functionally, cell wall formation. The chain is D-alanine--D-alanine ligase from Staphylococcus aureus (strain MRSA252).